We begin with the raw amino-acid sequence, 500 residues long: Probable malate:quinone oxidoreductase (500 aa).

The protein belongs to the MQO family. FAD serves as cofactor.

The catalysed reaction is (S)-malate + a quinone = a quinol + oxaloacetate. It participates in carbohydrate metabolism; tricarboxylic acid cycle; oxaloacetate from (S)-malate (quinone route): step 1/1. The protein is Probable malate:quinone oxidoreductase of Bacillus cereus (strain ATCC 10987 / NRS 248).